Consider the following 251-residue polypeptide: Dehydration-responsive element-binding protein 1I (251 aa).

The disordered stretch occupies residues 1-50; the sequence is MCTSKLEEITGEWPPPALQAASTTSSSEPCRRLSPPSSKRPAGRTKFHET. Positions 54–114 form a DNA-binding region, AP2/ERF; it reads VFRGVRRRGR…GRAAACLNFA (61 aa). The tract at residues 169-198 is disordered; the sequence is ATSEPSAASDDDAVTSSSSTTDADEEASPF.

The protein belongs to the AP2/ERF transcription factor family. ERF subfamily.

Its subcellular location is the nucleus. In terms of biological role, transcriptional activator that binds specifically to the DNA sequence 5'-[AG]CCGAC-3'. Binding to the C-repeat/DRE element mediates high salinity- and dehydration-inducible transcription. The chain is Dehydration-responsive element-binding protein 1I (DREB1I) from Oryza sativa subsp. japonica (Rice).